The primary structure comprises 426 residues: Homeobox protein knotted-1-like LET12 (426 aa).

Disordered regions lie at residues 1 to 26 (MEFQ…QQNA), 85 to 158 (QTSN…ENSW), and 270 to 290 (GVAP…DQAD). Residues 15 to 24 (QQQQQQQQQQ) show a composition bias toward low complexity. The span at 104–114 (AGGGSNGGGSG) shows a compositional bias: gly residues. Over residues 139-151 (ENNNNNNNNNNNN) the composition is skewed to low complexity. The ELK domain maps to 327 to 347 (ELKHELKQGYKEKIVDIREEI). A DNA-binding region (homeobox; TALE-type) is located at residues 348–411 (LRKRRAGKLP…NQRKRNWHSN (64 aa)). Residues 406 to 426 (RNWHSNPSTSSSQKSQTQECR) are disordered. Residues 413 to 426 (STSSSQKSQTQECR) are compositionally biased toward low complexity.

Belongs to the TALE/KNOX homeobox family. Ubiquitously expressed in the mature plant.

Its subcellular location is the nucleus. Its function is as follows. May have a role to play in formative events in ovule and embryo morphogenesis. This chain is Homeobox protein knotted-1-like LET12 (LET12), found in Solanum lycopersicum (Tomato).